Here is a 682-residue protein sequence, read N- to C-terminus: Potassium-transporting ATPase ATP-binding subunit (682 aa).

Helical transmembrane passes span 34–54, 62–82, 219–239, and 254–274; these read PVMFVVWAGSVLTTLLTLAMV, ALFTGVISLWLWFTVLFANFA, IALTILLIALTIVFLLATATL, and VLVALLVCLIPTTIGGLLSAI. The active-site 4-aspartylphosphate intermediate is Asp-307. ATP contacts are provided by residues Asp-344, Glu-348, 377–384, and Lys-395; that span reads FTAQSRMS. Mg(2+) is bound by residues Asp-518 and Asp-522. 3 helical membrane passes run 588–608, 616–636, and 662–682; these read FAIIPAAFAATYPQLNALNVM, AILSAVIFNALIIIFLIPLAL, and LVVPFIGIKVIDVLLTLLGLA.

Belongs to the cation transport ATPase (P-type) (TC 3.A.3) family. Type IA subfamily. In terms of assembly, the system is composed of three essential subunits: KdpA, KdpB and KdpC.

The protein localises to the cell inner membrane. The enzyme catalyses K(+)(out) + ATP + H2O = K(+)(in) + ADP + phosphate + H(+). Its function is as follows. Part of the high-affinity ATP-driven potassium transport (or Kdp) system, which catalyzes the hydrolysis of ATP coupled with the electrogenic transport of potassium into the cytoplasm. This subunit is responsible for energy coupling to the transport system and for the release of the potassium ions to the cytoplasm. This chain is Potassium-transporting ATPase ATP-binding subunit, found in Salmonella schwarzengrund (strain CVM19633).